Here is a 154-residue protein sequence, read N- to C-terminus: Ribosome maturation factor RimP (154 aa).

The protein belongs to the RimP family.

It localises to the cytoplasm. Functionally, required for maturation of 30S ribosomal subunits. The chain is Ribosome maturation factor RimP from Alkaliphilus oremlandii (strain OhILAs) (Clostridium oremlandii (strain OhILAs)).